Here is a 234-residue protein sequence, read N- to C-terminus: Peptidase E (234 aa).

Residues S123, D138, and H160 each act as charge relay system in the active site.

Belongs to the peptidase S51 family.

It localises to the cytoplasm. It catalyses the reaction Dipeptidase E catalyzes the hydrolysis of dipeptides Asp-|-Xaa. It does not act on peptides with N-terminal Glu, Asn or Gln, nor does it cleave isoaspartyl peptides.. In terms of biological role, hydrolyzes dipeptides containing N-terminal aspartate residues. May play a role in allowing the cell to use peptide aspartate to spare carbon otherwise required for the synthesis of the aspartate family of amino acids. This chain is Peptidase E, found in Haemophilus influenzae (strain PittGG).